We begin with the raw amino-acid sequence, 445 residues long: GTPase Der (445 aa).

EngA-type G domains are found at residues 3-167 (PVIA…YAGQ) and 180-353 (IKIA…AAAM). GTP is bound by residues 9-16 (GRPNVGKS), 56-60 (DTGGF), 119-122 (NKAE), 186-193 (GRPNVGKS), 233-237 (DTAGL), and 298-301 (NKWD). The 85-residue stretch at 354–438 (AKLPTPKLTR…PLRIEFRSSN (85 aa)) folds into the KH-like domain.

The protein belongs to the TRAFAC class TrmE-Era-EngA-EngB-Septin-like GTPase superfamily. EngA (Der) GTPase family. Associates with the 50S ribosomal subunit.

Its function is as follows. GTPase that plays an essential role in the late steps of ribosome biogenesis. This Burkholderia cenocepacia (strain HI2424) protein is GTPase Der.